The sequence spans 548 residues: Probable 2,3-bisphosphoglycerate-independent phosphoglycerate mutase (548 aa).

Mn(2+) is bound by residues aspartate 20 and serine 73. The active-site Phosphoserine intermediate is the serine 73. Residues histidine 134, 164–165 (RD), arginine 200, arginine 207, 279–282 (RGDR), and lysine 354 contribute to the substrate site. Positions 422, 426, 463, 464, and 493 each coordinate Mn(2+).

It belongs to the BPG-independent phosphoglycerate mutase family. In terms of assembly, monomer. The cofactor is Mn(2+).

The catalysed reaction is (2R)-2-phosphoglycerate = (2R)-3-phosphoglycerate. Its pathway is carbohydrate degradation; glycolysis; pyruvate from D-glyceraldehyde 3-phosphate: step 3/5. Catalyzes the interconversion of 2-phosphoglycerate and 3-phosphoglycerate. The protein is Probable 2,3-bisphosphoglycerate-independent phosphoglycerate mutase (gpmI) of Leptospira interrogans serogroup Icterohaemorrhagiae serovar Lai (strain 56601).